Here is a 447-residue protein sequence, read N- to C-terminus: Elongation factor 1-alpha (447 aa).

In terms of domain architecture, tr-type G spans 5–230 (KVHINIVVIG…DNINEPKRPS (226 aa)). Positions 14 to 21 (GHVDSGKS) are G1. GTP is bound at residue 14-21 (GHVDSGKS). The residue at position 55 (Lys55) is an N6,N6-dimethyllysine. Positions 70–74 (GITID) are G2. Lys79 carries the post-translational modification N6,N6,N6-trimethyllysine. The G3 stretch occupies residues 91 to 94 (DAPG). GTP-binding positions include 91 to 95 (DAPGH) and 153 to 156 (NKMD). Residues 153-156 (NKMD) form a G4 region. At Lys187 the chain carries N6,N6,N6-trimethyllysine. Residues 194-196 (SGF) are G5. Lys261 carries the post-translational modification N6-methyllysine. Glu289 carries the post-translational modification 5-glutamyl glycerylphosphorylethanolamine. Position 306 is an N6,N6,N6-trimethyllysine (Lys306). At Glu362 the chain carries 5-glutamyl glycerylphosphorylethanolamine. Residue Lys396 is modified to N6,N6,N6-trimethyllysine.

It belongs to the TRAFAC class translation factor GTPase superfamily. Classic translation factor GTPase family. EF-Tu/EF-1A subfamily.

It localises to the cytoplasm. This protein promotes the GTP-dependent binding of aminoacyl-tRNA to the A-site of ribosomes during protein biosynthesis. This chain is Elongation factor 1-alpha, found in Vicia faba (Broad bean).